The primary structure comprises 718 residues: Probable GTP diphosphokinase RSH2, chloroplastic (718 aa).

A chloroplast-targeting transit peptide spans methionine 1 to arginine 68. The tract at residues tyrosine 9–arginine 48 is disordered. Positions serine 19 to alanine 39 are enriched in low complexity. The 105-residue stretch at tyrosine 243 to methionine 347 folds into the HD domain.

Belongs to the RelA/SpoT family.

The protein localises to the plastid. Its subcellular location is the chloroplast. The enzyme catalyses GTP + ATP = guanosine 3'-diphosphate 5'-triphosphate + AMP. In terms of biological role, probable ppGpp (guanosine 3'-diphosphate 5'-diphosphate) synthetase that may be involved in a rapid plant ppGpp-mediated response to pathogens and other stresses. This chain is Probable GTP diphosphokinase RSH2, chloroplastic (RSH2), found in Oryza sativa subsp. japonica (Rice).